We begin with the raw amino-acid sequence, 97 residues long: Cobalt transport protein CbiN (97 aa).

Helical transmembrane passes span 6–26 (VLMILGVIILILAPLIMYSGL) and 68–88 (SLLFALQAAIGAIIIGYFFGY).

It belongs to the CbiN family. As to quaternary structure, forms an energy-coupling factor (ECF) transporter complex composed of an ATP-binding protein (A component, CbiO), a transmembrane protein (T component, CbiQ) and 2 possible substrate-capture proteins (S components, CbiM and CbiN) of unknown stoichimetry.

The protein resides in the cell membrane. Its pathway is cofactor biosynthesis; adenosylcobalamin biosynthesis. Functionally, part of the energy-coupling factor (ECF) transporter complex CbiMNOQ involved in cobalt import. In Methanococcus maripaludis (strain C5 / ATCC BAA-1333), this protein is Cobalt transport protein CbiN.